A 503-amino-acid chain; its full sequence is Activin receptor type-1-like (503 aa).

The first 21 residues, 1–21 (MTLGSPRKGLLMLLMALVTQG), serve as a signal peptide directing secretion. Residues 22–118 (DPVKPSRGPL…PSEQPGTDGQ (97 aa)) lie on the Extracellular side of the membrane. Disulfide bonds link cysteine 34/cysteine 51, cysteine 36/cysteine 41, and cysteine 46/cysteine 69. The mediates specificity for BMP ligand stretch occupies residues 73–76 (HREL). 2 disulfides stabilise this stretch: cysteine 77-cysteine 89 and cysteine 90-cysteine 95. Asparagine 98 is a glycosylation site (N-linked (GlcNAc...) asparagine). A helical transmembrane segment spans residues 119 to 141 (LALILGPVLALLALVALGVLGLW). Topologically, residues 142 to 503 (HVRRRQEKQR…NSPEKPKVIQ (362 aa)) are cytoplasmic. Phosphoserine occurs at positions 155, 160, and 161. Positions 172–201 (SMLGDLLDSDCTTGSGSGLPFLVQRTVARQ) constitute a GS domain. One can recognise a Protein kinase domain in the interval 202-492 (VALVECVGKG…LRIKKTLQKI (291 aa)). Residues 208 to 216 (VGKGRYGEV) and lysine 229 contribute to the ATP site. Catalysis depends on aspartate 330, which acts as the Proton acceptor.

It belongs to the protein kinase superfamily. TKL Ser/Thr protein kinase family. TGFB receptor subfamily. Interacts with TSC22D1/TSC-22. Requires Mg(2+) as cofactor. Mn(2+) is required as a cofactor.

Its subcellular location is the cell membrane. The catalysed reaction is L-threonyl-[receptor-protein] + ATP = O-phospho-L-threonyl-[receptor-protein] + ADP + H(+). The enzyme catalyses L-seryl-[receptor-protein] + ATP = O-phospho-L-seryl-[receptor-protein] + ADP + H(+). Type I receptor for TGF-beta family ligands BMP9/GDF2 and BMP10 and important regulator of normal blood vessel development. On ligand binding, forms a receptor complex consisting of two type II and two type I transmembrane serine/threonine kinases. Type II receptors phosphorylate and activate type I receptors which autophosphorylate, then bind and activate SMAD transcriptional regulators. May bind activin as well. The polypeptide is Activin receptor type-1-like (ACVRL1) (Homo sapiens (Human)).